Reading from the N-terminus, the 122-residue chain is MIQTESMLDVADNSGARRVQCIKVLGGSHRRYASVGDIIKVTVKEAIPRGRVKKGDVMNAVVVRTKFGIRRPDGSVIRFDDNAAVLLNNNKAPIATRIFGPVTRELRTEQFMKIISLAPEVL.

It belongs to the universal ribosomal protein uL14 family. In terms of assembly, part of the 50S ribosomal subunit. Forms a cluster with proteins L3 and L19. In the 70S ribosome, L14 and L19 interact and together make contacts with the 16S rRNA in bridges B5 and B8.

Functionally, binds to 23S rRNA. Forms part of two intersubunit bridges in the 70S ribosome. The sequence is that of Large ribosomal subunit protein uL14 from Acinetobacter baylyi (strain ATCC 33305 / BD413 / ADP1).